The sequence spans 289 residues: Enoyl-CoA delta isomerase 1, mitochondrial (289 aa).

A mitochondrion-targeting transit peptide spans 1-28; the sequence is MALAAARRVLLQAGSRLGRRGAVDGARR. K48 carries the post-translational modification N6-acetyllysine; alternate. K48 is subject to N6-succinyllysine; alternate. K71 carries the post-translational modification N6-succinyllysine. K76 carries the N6-acetyllysine modification. Substrate is bound by residues 93-97, G140, and N164; that span reads AGLDL. N6-acetyllysine; alternate occurs at positions 222, 229, and 255. K222, K229, and K255 each carry N6-succinyllysine; alternate. K275 is subject to N6-succinyllysine. Position 283 is an N6-acetyllysine; alternate (K283). Residue K283 is modified to N6-succinyllysine; alternate.

Belongs to the enoyl-CoA hydratase/isomerase family. Homotrimer.

The protein resides in the mitochondrion matrix. The catalysed reaction is a (3Z)-enoyl-CoA = a 4-saturated (2E)-enoyl-CoA. It catalyses the reaction a (3E)-enoyl-CoA = a 4-saturated (2E)-enoyl-CoA. It carries out the reaction (3Z)-octenoyl-CoA = (2E)-octenoyl-CoA. The enzyme catalyses (2E)-tetradecenoyl-CoA = (3Z)-tetradecenoyl-CoA. The catalysed reaction is (3Z)-dodecenoyl-CoA = (2E)-dodecenoyl-CoA. It catalyses the reaction (3Z)-hexenoyl-CoA = (2E)-hexenoyl-CoA. It carries out the reaction (3Z)-decenoyl-CoA = (2E)-decenoyl-CoA. Its pathway is lipid metabolism; fatty acid beta-oxidation. In terms of biological role, key enzyme of fatty acid beta-oxidation. Able to isomerize both 3-cis (3Z) and 3-trans (3E) double bonds into the 2-trans (2E) form in a range of enoyl-CoA species, with a preference for (3Z)-enoyl-CoAs over (3E)-enoyl-CoAs. The catalytic efficiency of this enzyme is not affected by the fatty acyl chain length. The sequence is that of Enoyl-CoA delta isomerase 1, mitochondrial from Rattus norvegicus (Rat).